Consider the following 184-residue polypeptide: Thymidine kinase (184 aa).

ATP contacts are provided by residues 10–17 (GPMYSGKT), H53, and 83–86 (DEVQ). E84 serves as the catalytic Proton acceptor. Substrate is bound at residue H115. Zn(2+) contacts are provided by C140 and C143. Residues 161 to 164 (IDVG) and Y169 each bind substrate. Zn(2+)-binding residues include C173 and C176.

Belongs to the thymidine kinase family. Homotetramer.

Its subcellular location is the cytoplasm. The catalysed reaction is thymidine + ATP = dTMP + ADP + H(+). The sequence is that of Thymidine kinase (tdk) from Thermotoga maritima (strain ATCC 43589 / DSM 3109 / JCM 10099 / NBRC 100826 / MSB8).